The primary structure comprises 429 residues: Glucose-1-phosphate adenylyltransferase (429 aa).

Residues G162, 177–178 (EK), and S209 each bind alpha-D-glucose 1-phosphate.

Belongs to the bacterial/plant glucose-1-phosphate adenylyltransferase family. Homotetramer.

It carries out the reaction alpha-D-glucose 1-phosphate + ATP + H(+) = ADP-alpha-D-glucose + diphosphate. Its pathway is glycan biosynthesis; glycogen biosynthesis. Its activity is regulated as follows. Activated by 3-phosphoglycerate and inhibited by phosphate. Functionally, involved in the biosynthesis of ADP-glucose, a building block required for the elongation reactions to produce glycogen. Catalyzes the reaction between ATP and alpha-D-glucose 1-phosphate (G1P) to produce pyrophosphate and ADP-Glc. This is Glucose-1-phosphate adenylyltransferase from Nostoc sp. (strain PCC 7120 / SAG 25.82 / UTEX 2576).